The following is a 129-amino-acid chain: Ribonuclease VapC12 (129 aa).

Residues aspartate 5 and aspartate 94 each coordinate Mg(2+).

This sequence belongs to the PINc/VapC protein family. Mg(2+) serves as cofactor.

Functionally, toxic component of a type II toxin-antitoxin (TA) system. An RNase. The cognate antitoxin is VapB12. This chain is Ribonuclease VapC12, found in Mycobacterium tuberculosis (strain CDC 1551 / Oshkosh).